The primary structure comprises 421 residues: UPF0415 protein C7orf25 (421 aa).

This sequence belongs to the UPF0415 family.

This is UPF0415 protein C7orf25 (C7orf25) from Homo sapiens (Human).